Here is a 79-residue protein sequence, read N- to C-terminus: MSDVAERVKKIVVDHLGVEESKVTENASFIDDLGADSLDTVELVMAFEEEFGCEIPDDAAEKILTVKDAIDFIKANAAA.

In terms of domain architecture, Carrier spans 2–77 (SDVAERVKKI…DAIDFIKANA (76 aa)). S37 is modified (O-(pantetheine 4'-phosphoryl)serine).

This sequence belongs to the acyl carrier protein (ACP) family. Post-translationally, 4'-phosphopantetheine is transferred from CoA to a specific serine of apo-ACP by AcpS. This modification is essential for activity because fatty acids are bound in thioester linkage to the sulfhydryl of the prosthetic group.

It localises to the cytoplasm. It functions in the pathway lipid metabolism; fatty acid biosynthesis. Carrier of the growing fatty acid chain in fatty acid biosynthesis. The polypeptide is Acyl carrier protein (Azospirillum brasilense).